The following is a 438-amino-acid chain: Xanthine permease (438 aa).

A run of 13 helical transmembrane segments spans residues 11 to 31 (LGIQHVLAMYAGAIVVPLIVG), 41 to 61 (LTYLVSIDIFMCGVATLLQVW), 65 to 85 (FFGIGLPVVLGCTFTAVSPMI), 100 to 120 (IIASGILVILISFFFGKLVSF), 121 to 141 (FPPVVTGSVVTIIGITLMPVA), 154 to 174 (FGDLSNLALAFTVLSIIVLLY), 180 to 200 (FIKSVSILIGILIGTFIAYFM), 220 to 240 (FYFGAPSFHAAPIITMSIVAI), 272 to 292 (AEGLAVLLGGIFNAFPYTAFS), 308 to 328 (VIVVTGVILMAFGLFPKIAAF), 331 to 351 (IIPSAVLGGAMVAMFGMVIAY), 367 to 387 (LLIVACSVGLGLGVTVVPDIF), and 396 to 416 (LLTTNGIVAGSFTAVVLNIVY).

It belongs to the nucleobase:cation symporter-2 (NCS2) (TC 2.A.40) family.

Its subcellular location is the cell membrane. Its function is as follows. Transport of xanthine in the cell. The protein is Xanthine permease (pbuX) of Bacillus subtilis (strain 168).